We begin with the raw amino-acid sequence, 498 residues long: Type II secretion system protein E (498 aa).

261-268 (GPTGSGKS) is a binding site for ATP. Residues cysteine 394, cysteine 397, cysteine 425, and cysteine 428 each coordinate Zn(2+).

This sequence belongs to the GSP E family. As to quaternary structure, forms homooligomers; most probably hexamers. Interacts with OutL/GspL. Zn(2+) serves as cofactor.

Its subcellular location is the cell inner membrane. It catalyses the reaction ATP + H2O + cellular proteinSide 1 = ADP + phosphate + cellular proteinSide 2.. In terms of biological role, ATPase component of the type II secretion system required for the energy-dependent secretion of extracellular factors such as proteases and toxins from the periplasm. Acts as a molecular motor to provide the energy that is required for assembly of the pseudopilus and the extrusion of substrates generated in the cytoplasm. This chain is Type II secretion system protein E (outE), found in Pectobacterium carotovorum subsp. carotovorum (Erwinia carotovora subsp. carotovora).